We begin with the raw amino-acid sequence, 229 residues long: Ribonuclease 3 (229 aa).

Positions 7 to 132 (LKAFEGRIGH…VIAAVYLDAG (126 aa)) constitute an RNase III domain. Glu-45 provides a ligand contact to Mg(2+). Residue Asp-49 is part of the active site. Mg(2+) contacts are provided by Asp-118 and Glu-121. Glu-121 is a catalytic residue. One can recognise a DRBM domain in the interval 157–226 (DAKTALQEWA…ARALLARMEA (70 aa)).

It belongs to the ribonuclease III family. In terms of assembly, homodimer. The cofactor is Mg(2+).

The protein localises to the cytoplasm. It catalyses the reaction Endonucleolytic cleavage to 5'-phosphomonoester.. In terms of biological role, digests double-stranded RNA. Involved in the processing of primary rRNA transcript to yield the immediate precursors to the large and small rRNAs (23S and 16S). Processes some mRNAs, and tRNAs when they are encoded in the rRNA operon. Processes pre-crRNA and tracrRNA of type II CRISPR loci if present in the organism. In Cereibacter sphaeroides (strain ATCC 17029 / ATH 2.4.9) (Rhodobacter sphaeroides), this protein is Ribonuclease 3.